The following is a 686-amino-acid chain: MSSRRETRASAQTFIENLKPLQHPNSEKVFLSGSRPDLRVGMRQIHQTDTLHAKTNGETLREQNPPIMVYDCAGAYSDPNADINVHAGLEKFRQSWIEERQDTELLKGVSSQFTQQRLADDGLDHLRFDALVKPRRAKAGRCVTQMHYARRGIITPEMEYIAIRENMAREHVPEGVLTQKSAGESFGACIGEPITAEFVRSEVARGRAIIPLNINHPEAEPMIIGRNFLVKVNANIGNSAVTSSIEEEVEKLVWSTRWGADTVMDLSTGRYIHETREWIIRNSPVPIGTVPIYQALEKVNGVAEDLNWEVFRDTLIEQAEQGVDYFTIHAGVLLRYVPMTAKRLTGIVSRGGSIMAKWCLSHHKESFLYEHFREICELCAAYDVSLSLGDGMRPGCIADANDEAQFAELETLGELVKIAWEYDVQTIIEGPGHVPMHLIKVNMEKQLEHCDEAPFYTLGPQTTDIAPGYDHFTSGIGAAQMAWYGCAMLCYVTPKEHLGLPNKEDVKQGLIAYKIAAHAADIAKGHPGAQVRDNALSKARFEFRWEDQYNLGLDPDTARAYHDESLPQESAKVAHFCSMCGPKFCSMKITQEVREYAADQEAKALLAQAPLAQANIQDVELISPDEYKARQATEADLAKAMAQKSAEFKSQGSALYHSIDSSGINDNKNDQQDASVVRVPSLEIEG.

Substrate contacts are provided by residues Asn235, Met264, Tyr293, His329, 349 to 351 (SRG), 390 to 393 (DGMR), and Glu429. Position 433 (His433) interacts with Zn(2+). Tyr456 is a substrate binding site. His497 contacts Zn(2+). [4Fe-4S] cluster-binding residues include Cys577, Cys580, and Cys585. The interval 659–686 (IDSSGINDNKNDQQDASVVRVPSLEIEG) is disordered.

The protein belongs to the ThiC family. In terms of assembly, homodimer. [4Fe-4S] cluster serves as cofactor.

The enzyme catalyses 5-amino-1-(5-phospho-beta-D-ribosyl)imidazole + S-adenosyl-L-methionine = 4-amino-2-methyl-5-(phosphooxymethyl)pyrimidine + CO + 5'-deoxyadenosine + formate + L-methionine + 3 H(+). It participates in cofactor biosynthesis; thiamine diphosphate biosynthesis. Catalyzes the synthesis of the hydroxymethylpyrimidine phosphate (HMP-P) moiety of thiamine from aminoimidazole ribotide (AIR) in a radical S-adenosyl-L-methionine (SAM)-dependent reaction. This Shewanella denitrificans (strain OS217 / ATCC BAA-1090 / DSM 15013) protein is Phosphomethylpyrimidine synthase.